A 146-amino-acid chain; its full sequence is Hemoglobin subunit beta (146 aa).

Val1 carries the N-acetylvaline modification. A Globin domain is found at 2–146; that stretch reads HLTDAEKAAI…VASALAHKYH (145 aa). His63 contacts heme b. N6-acetyllysine is present on Lys82. His92 lines the heme b pocket. Cys93 is subject to S-nitrosocysteine. Lys144 carries the N6-acetyllysine modification.

The protein belongs to the globin family. In terms of assembly, heterotetramer of two alpha chains and two beta chains. Red blood cells.

Functionally, involved in oxygen transport from the lung to the various peripheral tissues. The protein is Hemoglobin subunit beta (HBB) of Microtus xanthognathus (Yellow-cheeked vole).